A 279-amino-acid chain; its full sequence is Acetyl-coenzyme A carboxylase carboxyl transferase subunit beta (279 aa).

One can recognise a CoA carboxyltransferase N-terminal domain in the interval 27 to 279 (LFLACPYCGT…IVKLHHRTEI (253 aa)). Residues C31, C34, C49, and C52 each coordinate Zn(2+). A C4-type zinc finger spans residues 31–52 (CPYCGTQMYNKQLGDYRVCAKC).

Belongs to the AccD/PCCB family. In terms of assembly, acetyl-CoA carboxylase is a heterohexamer composed of biotin carboxyl carrier protein (AccB), biotin carboxylase (AccC) and two subunits each of ACCase subunit alpha (AccA) and ACCase subunit beta (AccD). The cofactor is Zn(2+).

Its subcellular location is the cytoplasm. The catalysed reaction is N(6)-carboxybiotinyl-L-lysyl-[protein] + acetyl-CoA = N(6)-biotinyl-L-lysyl-[protein] + malonyl-CoA. Its pathway is lipid metabolism; malonyl-CoA biosynthesis; malonyl-CoA from acetyl-CoA: step 1/1. In terms of biological role, component of the acetyl coenzyme A carboxylase (ACC) complex. Biotin carboxylase (BC) catalyzes the carboxylation of biotin on its carrier protein (BCCP) and then the CO(2) group is transferred by the transcarboxylase to acetyl-CoA to form malonyl-CoA. The protein is Acetyl-coenzyme A carboxylase carboxyl transferase subunit beta of Leuconostoc citreum (strain KM20).